Consider the following 935-residue polypeptide: MMLSLRRFSMYVLRSLRLHFKKIIITLLTIQLLFITIFVLGGRSSIIDGNWKSFMALFFKPLAYTNRNNNHASFDLRSKDNVAKLYEKMNFDTSGKWIDTYTLKNNLLTVKMGPEKGQVLDSVDELRYYDNDPRLVWSVLLDHLLESDSNEYAFSWYDWANFDSTNKLIALRHTNISCQFVCEGAFDKNVLEMVESEVQEPLFVTNRNKYDESLWYNRVRKVVDSNSVQQAIHDHCMNNDAYSNGTPFELPFIISEISERLRPEVYDLQAKNHLLYSNFTPLSLTVLDSDKDAYRINLKTTDSSKSNIVQTNLLQNYIKRHRNEMVNGDLIFNHTSMFEKFLHHGSTKKRKLDVEALDKTIYAGEYLELSPSDFQFNAKERIIELETRLRSEGLPSHDTHYLRSLKTSVNTSPALQQKYFAEASDITDATADGHHRDRRFFSIGHNLLNDPQEFEARLNSLIRNFQKFVKANGLISWLSHGTLYGYLYDGLKFPWDVDHDLQMPIKHLHYLSQYFNQSLILEDPREGNGRFLLDVGSAITVGVHGNGENNIDARFIDIDSGIYIDITGLSVSSDAAKQYMSKFVEEESSGESFSALIEDYKFDENDYFDEVDGREGLAKYTIHELMEWVNSHPDDFTDAEKNLVTKTYKKELAISRSDYAEKDLSPKQRYLVNEKYNLYNCRNQHFSSLNIISPLRNTMFSGVSAFVPNRPIATLNNEYKVPAKYGLLSFQGKVYLPEFRYWFSFADMKKFANLQLKEPKITRLESPLNDLKFSDISLLITNILKCGFHSVFASLFNSFDSTVYRLKELEIQYDPSLSEEEKSSLLKTLRRGMSKKIKSPEKDPIIYIYERKLWENVEKLLNASNIYNIASQVEKEKGKEFVERSQQVYERNFDGFRLPDGGNSKTVNDLNSKGLNLFGDNKKTSNNIFGSDQKY.

Residues 1–21 (MMLSLRRFSMYVLRSLRLHFK) are Cytoplasmic-facing. A helical; Signal-anchor for type II membrane protein transmembrane segment spans residues 22 to 42 (KIIITLLTIQLLFITIFVLGG). The Lumenal segment spans residues 43–935 (RSSIIDGNWK…NNIFGSDQKY (893 aa)). A DXD motif is present at residues 498-500 (DHD).

Belongs to the MNN4 family.

The protein resides in the golgi apparatus membrane. Functionally, plays a role in N-glycan mannosylphosphorylation and has partially redundant function with MNN4. This chain is Mannosyltransferase regulator 14, found in Saccharomyces cerevisiae (strain ATCC 204508 / S288c) (Baker's yeast).